A 343-amino-acid chain; its full sequence is MIKASIIGASGYVGVELIRLLLRHPEVEIVSIISSSSNQLSIDKTNPQFKKVSNLVFEEFKIEAIQEADVVFCALPHGISQEYVKIGYDIGKVVIDLSADFRYKDLQRYAKDYSQHKYPELLSKSAYGLCEINREEIKNAQIIGNPGCYPTSAILGLAPLLKNKLVDKNSIIIDSKSGVSGAGKKFDFAYSFCELDENFKAYSVTKHRHTSEIEEKCSFLFGEDLNLSFTPHLLPVKRGILSTIYANLIKKIDKNDLVEIYNEFYKDEYFIRIFEDELPELKYVRGTNFVDIGFEVDKKTNRVIIISCIDNLIKGAAGQAIQNMNIKFSLDEKMGLIMVGEYF.

Cysteine 148 is a catalytic residue.

The protein belongs to the NAGSA dehydrogenase family. Type 1 subfamily.

The protein localises to the cytoplasm. The catalysed reaction is N-acetyl-L-glutamate 5-semialdehyde + phosphate + NADP(+) = N-acetyl-L-glutamyl 5-phosphate + NADPH + H(+). It functions in the pathway amino-acid biosynthesis; L-arginine biosynthesis; N(2)-acetyl-L-ornithine from L-glutamate: step 3/4. Its function is as follows. Catalyzes the NADPH-dependent reduction of N-acetyl-5-glutamyl phosphate to yield N-acetyl-L-glutamate 5-semialdehyde. This chain is N-acetyl-gamma-glutamyl-phosphate reductase, found in Caldicellulosiruptor bescii (strain ATCC BAA-1888 / DSM 6725 / KCTC 15123 / Z-1320) (Anaerocellum thermophilum).